Reading from the N-terminus, the 189-residue chain is Protein GrpE (189 aa).

Residues Met-1–Thr-14 are compositionally biased toward basic and acidic residues. Positions Met-1 to Ala-23 are disordered.

It belongs to the GrpE family. In terms of assembly, homodimer.

Its subcellular location is the cytoplasm. Participates actively in the response to hyperosmotic and heat shock by preventing the aggregation of stress-denatured proteins, in association with DnaK and GrpE. It is the nucleotide exchange factor for DnaK and may function as a thermosensor. Unfolded proteins bind initially to DnaJ; upon interaction with the DnaJ-bound protein, DnaK hydrolyzes its bound ATP, resulting in the formation of a stable complex. GrpE releases ADP from DnaK; ATP binding to DnaK triggers the release of the substrate protein, thus completing the reaction cycle. Several rounds of ATP-dependent interactions between DnaJ, DnaK and GrpE are required for fully efficient folding. This chain is Protein GrpE, found in Lawsonia intracellularis (strain PHE/MN1-00).